Consider the following 529-residue polypeptide: Peptide chain release factor 3 (529 aa).

In terms of domain architecture, tr-type G spans A11–M280. Residues S20–T27, D88–H92, and N142–D145 each bind GTP.

The protein belongs to the TRAFAC class translation factor GTPase superfamily. Classic translation factor GTPase family. PrfC subfamily.

It localises to the cytoplasm. Functionally, increases the formation of ribosomal termination complexes and stimulates activities of RF-1 and RF-2. It binds guanine nucleotides and has strong preference for UGA stop codons. It may interact directly with the ribosome. The stimulation of RF-1 and RF-2 is significantly reduced by GTP and GDP, but not by GMP. This chain is Peptide chain release factor 3, found in Yersinia enterocolitica serotype O:8 / biotype 1B (strain NCTC 13174 / 8081).